We begin with the raw amino-acid sequence, 634 residues long: Sodium-dependent neutral amino acid transporter B(0)AT1 (634 aa).

Topologically, residues 1 to 41 (MVRLVLPNPGLDTRILSLAELETIEQEEASSRPKWDNKAQY) are cytoplasmic. S17 bears the Phosphoserine mark. The chain crosses the membrane as a helical span at residues 42–62 (LLTCVGFCVGLGNVWRFPYLC). Over 63 to 65 (QSH) the chain is Extracellular. A helical membrane pass occupies residues 66–86 (GGGAFMIPFLILLVLEGIPLL). Residues 87-120 (HLEFAIGQRLRRGSLGVWSSIHPALKGVGLTSML) lie on the Cytoplasmic side of the membrane. A helical transmembrane segment spans residues 121–141 (VSFVVGLYYNTIISWIMWYLF). Residues 142-192 (NSFQEPLPWSECPLNENQTGYVDECARSSPVDYFWYRETLNISTSISDSGS) are Extracellular-facing. N158 and N182 each carry an N-linked (GlcNAc...) asparagine glycan. Residues 193–213 (IQWRMLLCLACAWSVLYMCTI) traverse the membrane as a helical segment. Over 214 to 221 (RGIETTGK) the chain is Cytoplasmic. A helical transmembrane segment spans residues 222-242 (VVYITSTLPYVVLTIFLIRGL). At 243–268 (TLKGATKGIIYLFTPNVTELANPVTW) the chain is on the extracellular side. N258 is a glycosylation site (N-linked (GlcNAc...) asparagine). The helical transmembrane segment at 269-289 (LDAGAQVFFSFSLAFGGLISF) threads the bilayer. The Cytoplasmic portion of the chain corresponds to 290-304 (SSYNSVHNNCERDSV). A helical transmembrane segment spans residues 305-325 (IVSIINGFTSVYVAIVIYSII). Over 326 to 413 (GFRATQRYDD…TEAITKMPVS (88 aa)) the chain is Extracellular. Residues N354 and N368 are each glycosylated (N-linked (GlcNAc...) asparagine). A helical transmembrane segment spans residues 414–434 (PLWSVLFFIMLFCLGLSSMFG). Residues 435-456 (NMEGVVVPLQDLKVIPPKWPKE) are Cytoplasmic-facing. The helical transmembrane segment at 457–477 (LLTGLICLGTFLIGFIFTLNS) threads the bilayer. Residues 478–487 (GQYWLSLLDS) are Extracellular-facing. A helical transmembrane segment spans residues 488–508 (YAVSIPLLIIAFCEMFSVVYV). Over 509 to 531 (YGVDRFNKDIEFMIGHKPNIFWQ) the chain is Cytoplasmic. A helical transmembrane segment spans residues 532-552 (VTWRVVSPLLMLIILVFFFVV). The Extracellular portion of the chain corresponds to 553 to 581 (QVSQELTYSIWNPGYEEFPKSQKISHPNW). The helical transmembrane segment at 582–602 (VYAVVVIVAGVPSLTIPSYAI) threads the bilayer. The Cytoplasmic portion of the chain corresponds to 603 to 634 (YKLIRNCCQKPGDRQGLVSTLSTASMNGDLKY). S627 is subject to Phosphoserine.

This sequence belongs to the sodium:neurotransmitter symporter (SNF) (TC 2.A.22) family. SLC6A19 subfamily. Interacts in a tissue-specific manner with ACE2 in small intestine and with CLTRN in the kidney. Interacts with CLTRN; this interaction is required for trafficking of SLC6A19 to the plasma membrane and for its catalytic activation in kidneys. Interacts with ACE2; this interaction is required for trafficking of SLC6A19 to the plasma membrane and for its catalytic activation in intestine. Interacts with ANPEP; the interaction positively regulates its amino acid transporter activity.

The protein localises to the membrane. It catalyses the reaction L-alanine(in) + Na(+)(in) = L-alanine(out) + Na(+)(out). It carries out the reaction L-cysteine(in) + Na(+)(in) = L-cysteine(out) + Na(+)(out). The catalysed reaction is L-glutamine(in) + Na(+)(in) = L-glutamine(out) + Na(+)(out). The enzyme catalyses glycine(in) + Na(+)(in) = glycine(out) + Na(+)(out). It catalyses the reaction L-isoleucine(in) + Na(+)(in) = L-isoleucine(out) + Na(+)(out). It carries out the reaction L-leucine(in) + Na(+)(in) = L-leucine(out) + Na(+)(out). The catalysed reaction is L-methionine(in) + Na(+)(in) = L-methionine(out) + Na(+)(out). The enzyme catalyses L-phenylalanine(in) + Na(+)(in) = L-phenylalanine(out) + Na(+)(out). It catalyses the reaction L-serine(in) + Na(+)(in) = L-serine(out) + Na(+)(out). It carries out the reaction L-tryptophan(in) + Na(+)(in) = L-tryptophan(out) + Na(+)(out). The catalysed reaction is L-tyrosine(in) + Na(+)(in) = L-tyrosine(out) + Na(+)(out). The enzyme catalyses L-valine(in) + Na(+)(in) = L-valine(out) + Na(+)(out). Functionally, transporter that mediates resorption of neutral amino acids across the apical membrane of renal and intestinal epithelial cells. This uptake is sodium-dependent and chloride-independent. Requires CLTRN in kidney or ACE2 in intestine for cell surface expression and amino acid transporter activity. This Pongo abelii (Sumatran orangutan) protein is Sodium-dependent neutral amino acid transporter B(0)AT1 (SLC6A19).